The sequence spans 565 residues: Transmembrane 7 superfamily member 3 (565 aa).

An N-terminal signal peptide occupies residues 1–21 (MWRLRLLVLAVLAAGSAEAQA). 4 N-linked (GlcNAc...) asparagine glycosylation sites follow: Asn-22, Asn-56, Asn-70, and Asn-259. Helical transmembrane passes span 287–307 (VSTKVFSTLFALLGLFVCFFG), 315–335 (LFFVGFIFLGFFFYILITRLT), 341–361 (VRLALTAVAGSFGGLLLVASW), 364–384 (FGILTLCMLCVGLVLGFLVSS), 402–422 (VFWVTFSCIALLVPVIFMGCL), 427–447 (ILACGVVGSYSVVLAVNSYMF), and 478–498 (NDYIILAVWGMLAVSGITLQI).

It localises to the cell membrane. Functionally, involved in the inhibition of cytokine-induced death of pancreatic beta cells. Involved in the promotion of insulin secretion from pancreatic beta cells. Is a downstream transcriptional target of p53/TP53, and acts as a pro-survival homeostatic factor that attenuates the development of cellular stress. Maintains protein homeostasis and promotes cell survival through attenuation of endoplasmic reticulum (ER) stress and the subsequent induction of unfolded protein response (UPR). This Mus musculus (Mouse) protein is Transmembrane 7 superfamily member 3 (Tm7sf3).